A 298-amino-acid chain; its full sequence is HTH-type transcriptional regulator ArgP (298 aa).

Residues 4-60 (LDYKWIEALDAVVYQGSFERAAEHLFVSQSAISQRIKQLEKFLAQPVLIREQPPKPT) form the HTH lysR-type domain. The segment at residues 21 to 40 (FERAAEHLFVSQSAISQRIK) is a DNA-binding region (H-T-H motif).

This sequence belongs to the LysR transcriptional regulatory family. Homodimer.

Functionally, controls the transcription of genes involved in arginine and lysine metabolism. The polypeptide is HTH-type transcriptional regulator ArgP (Vibrio parahaemolyticus serotype O3:K6 (strain RIMD 2210633)).